Reading from the N-terminus, the 415-residue chain is Gamma-glutamyl phosphate reductase (415 aa).

Belongs to the gamma-glutamyl phosphate reductase family.

It localises to the cytoplasm. It catalyses the reaction L-glutamate 5-semialdehyde + phosphate + NADP(+) = L-glutamyl 5-phosphate + NADPH + H(+). Its pathway is amino-acid biosynthesis; L-proline biosynthesis; L-glutamate 5-semialdehyde from L-glutamate: step 2/2. Functionally, catalyzes the NADPH-dependent reduction of L-glutamate 5-phosphate into L-glutamate 5-semialdehyde and phosphate. The product spontaneously undergoes cyclization to form 1-pyrroline-5-carboxylate. This chain is Gamma-glutamyl phosphate reductase, found in Listeria welshimeri serovar 6b (strain ATCC 35897 / DSM 20650 / CCUG 15529 / CIP 8149 / NCTC 11857 / SLCC 5334 / V8).